A 1146-amino-acid chain; its full sequence is Inositol hexakisphosphate and diphosphoinositol-pentakisphosphate kinase (1146 aa).

The segment at methionine 1–leucine 33 is disordered. Polar residues predominate over residues glutamine 16 to serine 25. Phosphoserine is present on residues serine 31, serine 54, and serine 77. Positions threonine 93 to proline 185 are disordered. Over residues glycine 96 to threonine 106 the composition is skewed to low complexity. A compositionally biased stretch (basic and acidic residues) spans lysine 110–alanine 120. Polar residues predominate over residues leucine 125 to glycine 144. Residues serine 164 to serine 178 are compositionally biased toward low complexity. Position 197-198 (alanine 197–lysine 198) interacts with substrate. ATP-binding positions include arginine 278, lysine 351, histidine 358, arginine 377, glutamate 402–methionine 405, and aspartate 412–lysine 414. Residue arginine 377–lysine 378 coordinates substrate. Substrate-binding residues include lysine 414 and arginine 428. ATP-binding positions include serine 430, aspartate 475, and aspartate 487 to asparagine 489. A substrate-binding site is contributed by serine 492–lysine 495. Positions arginine 530–aspartate 597 are polyphosphoinositide-binding domain. 2 positions are modified to phosphoserine: serine 895 and serine 1107. Positions threonine 1106–aspartate 1146 are disordered.

The protein belongs to the histidine acid phosphatase family. VIP1 subfamily.

The protein localises to the cytoplasm. It localises to the cytoskeleton. It carries out the reaction 1D-myo-inositol hexakisphosphate + ATP = 1-diphospho-1D-myo-inositol 2,3,4,5,6-pentakisphosphate + ADP. The catalysed reaction is 5-diphospho-1D-myo-inositol 1,2,3,4,6-pentakisphosphate + ATP + H(+) = 1,5-bis(diphospho)-1D-myo-inositol 2,3,4,6-tetrakisphosphate + ADP. Bifunctional inositol kinase that acts in concert with the IP6K kinases to synthesize the diphosphate group-containing inositol pyrophosphates diphosphoinositol pentakisphosphate, PP-InsP5, and bis-diphosphoinositol tetrakisphosphate, (PP)2-InsP4. Phosphorylates inositol hexakisphosphate (InsP6) at position 1 to produce PP-InsP5 which is in turn phosphorylated by IP6Ks to produce (PP)2-InsP4. Alternatively, phosphorylates PP-InsP5 at position 1, produced by IP6Ks from InsP6, to produce (PP)2-InsP4. Required for maintaining cellular integrity, normal growth and interactions with the ARP complex. Acts as a regulator of the PHO80-PHO85 cyclin/cyclin-dependent kinase (CDK) complex, thereby regulating signaling of phosphate availability. Required for the function of the cortical actin cytoskeleton, possibly by participating in correct F-actin localization and ensuring polarized growth. Regulates polarized growth and modulates interphase microtubule cytoskeleton. Regulates microtubule dynamics without the requirement of microtubule plus-end tracking protein Mal3. Required for growth zone selection. The polypeptide is Inositol hexakisphosphate and diphosphoinositol-pentakisphosphate kinase (Saccharomyces cerevisiae (strain ATCC 204508 / S288c) (Baker's yeast)).